The following is a 122-amino-acid chain: UPF0382 membrane protein SERP0230 (122 aa).

The next 4 helical transmembrane spans lie at 3–23 (VFII…AFGA), 46–66 (MYHG…SINV), 69–89 (AGWL…FLAL), and 98–118 (ITPI…IATL).

The protein belongs to the UPF0382 family.

Its subcellular location is the cell membrane. The protein is UPF0382 membrane protein SERP0230 of Staphylococcus epidermidis (strain ATCC 35984 / DSM 28319 / BCRC 17069 / CCUG 31568 / BM 3577 / RP62A).